We begin with the raw amino-acid sequence, 314 residues long: Ribosomal RNA small subunit methyltransferase H (314 aa).

Residues 37–39, aspartate 57, phenylalanine 83, aspartate 105, and glutamine 112 contribute to the S-adenosyl-L-methionine site; that span reads GGH.

The protein belongs to the methyltransferase superfamily. RsmH family.

The protein localises to the cytoplasm. It carries out the reaction cytidine(1402) in 16S rRNA + S-adenosyl-L-methionine = N(4)-methylcytidine(1402) in 16S rRNA + S-adenosyl-L-homocysteine + H(+). Functionally, specifically methylates the N4 position of cytidine in position 1402 (C1402) of 16S rRNA. The polypeptide is Ribosomal RNA small subunit methyltransferase H (Thioalkalivibrio sulfidiphilus (strain HL-EbGR7)).